Reading from the N-terminus, the 484-residue chain is MTGKATPEASVSTSEGTAPEPAKVPTPEPSGQVAASESTGQEQAPEPQKQPQAQDPAAHEAPATPATTKPEAPSEDVPSAPLQLTLEDVSHSSLTVSWEPPEDLGSWGSRAMCWSSVREGASEWVPVNPRPVMVTQQTVRNLALGDKFFLRVTAVNSAGAGPPAVLDQPVHIQEITEAPKIRVPRHLRQTYIRQVGESVNLQIPFQGKPKPQASWTHNGHALDSQRVNVRSGDQDSILFIRSAQRSDSGRYELTVRLEGLEAKAAIDILVIEKPGPPSSIKLLDVWGCNAALEWMPPQDTGNTELLGYTVQKADKKTGQWFTVLERYHPTTCTVSDLIIGNSYSFRVFSENLCGLSDLATTTKELAHIHKAAITAKPREFTERDFSEPPSFTQPVADRTSTPGYSTQLFCSVRASPKPKIIWMKNKMSIQGDPKYRAVSEQGVCTLEIRKPSPFDSGVYTCKAINVLGEPAVDCRLEVKASATH.

The segment at Met-1–Pro-78 is disordered. A phosphothreonine mark is found at Thr-2, Thr-6, and Thr-26. Residues Gln-41–Glu-71 are compositionally biased toward low complexity. Residues Ala-80–Ile-175 form the Fibronectin type-III 1 domain. Residues Pro-179–Asp-267 form the Ig-like C2-type 1 domain. Positions Pro-276–Ala-371 constitute a Fibronectin type-III 2 domain. The region spanning Pro-389–Lys-479 is the Ig-like C2-type 2 domain.

This sequence belongs to the immunoglobulin superfamily. MyBP family. As to expression, skeletal muscle.

Its function is as follows. Binds to myosin; probably involved in interaction with thick myofilaments in the A-band. The polypeptide is Myosin-binding protein H (Mybph) (Rattus norvegicus (Rat)).